Reading from the N-terminus, the 815-residue chain is cGMP-specific 3',5'-cyclic phosphodiesterase delta (815 aa).

Residues 1 to 56 are Cytoplasmic-facing; that stretch reads MNEYNNDNMEQEKEKKKEEQKYKNIIKKEYFIFPRLYDKNKEIEYNKLRIHNIKEY. A helical membrane pass occupies residues 57–77; it reads ICIHLTISLFIILIECFVFSF. Over 78–86 the chain is Extracellular; that stretch reads NLNIKDTTY. The helical transmembrane segment at 87–107 threads the bilayer; sequence VEICVVIFSILNCLMHIVVLI. Residues 108-120 are Cytoplasmic-facing; that stretch reads KMYFFTSESVYTK. The chain crosses the membrane as a helical span at residues 121-141; that stretch reads GVFIGYIVLNQVFQFLSLYFF. Topologically, residues 142-160 are extracellular; it reads TKRNEQSKNDIAHLKYYDN. The chain crosses the membrane as a helical span at residues 161 to 181; it reads SFNLYVHFFVDSVFILCLPAL. Residues 182–183 are Cytoplasmic-facing; it reads SF. A helical transmembrane segment spans residues 184–204; the sequence is FLSVLFMMMFLCLNILLINMI. Over 205 to 210 the chain is Extracellular; it reads KFNKTN. N-linked (GlcNAc...) asparagine glycosylation occurs at Asn207. Residues 211 to 231 form a helical membrane-spanning segment; it reads YGSDIYHICLLSVVLLMFLIL. Over 232-815 the chain is Cytoplasmic; the sequence is RYMMEERNRL…FKEEIKHGKL (584 aa). Residues 384 to 762 form the PDEase domain; that stretch reads YEVEVLKNIK…QTWRLIEKNI (379 aa). His459 serves as the catalytic Proton donor. 459–463 lines the 3',5'-cyclic GMP pocket; sequence HNANH. Residues His463, His499, Asp500, and Asp616 each contribute to the a divalent metal cation site. Positions 500, 616, and 715 each coordinate 3',5'-cyclic GMP.

It belongs to the cyclic nucleotide phosphodiesterase family. A divalent metal cation is required as a cofactor.

It localises to the membrane. The catalysed reaction is 3',5'-cyclic GMP + H2O = GMP + H(+). The protein operates within purine metabolism; 3',5'-cyclic GMP degradation; GMP from 3',5'-cyclic GMP: step 1/1. Specifically hydrolyzes the second messenger cGMP, which is a key regulator of many important physiological processes. Probably by regulating cGMP levels, required for activation of gametogenesis. This chain is cGMP-specific 3',5'-cyclic phosphodiesterase delta, found in Plasmodium falciparum (isolate 3D7).